The chain runs to 195 residues: Pyridoxal 5'-phosphate synthase subunit PdxT (195 aa).

An L-glutamine-binding site is contributed by 53–55 (GES). C82 serves as the catalytic Nucleophile. L-glutamine-binding positions include R108 and 134–135 (IR). Residues H173 and E175 each act as charge relay system in the active site.

It belongs to the glutaminase PdxT/SNO family. In terms of assembly, in the presence of PdxS, forms a dodecamer of heterodimers. Only shows activity in the heterodimer.

The enzyme catalyses aldehydo-D-ribose 5-phosphate + D-glyceraldehyde 3-phosphate + L-glutamine = pyridoxal 5'-phosphate + L-glutamate + phosphate + 3 H2O + H(+). The catalysed reaction is L-glutamine + H2O = L-glutamate + NH4(+). It participates in cofactor biosynthesis; pyridoxal 5'-phosphate biosynthesis. Functionally, catalyzes the hydrolysis of glutamine to glutamate and ammonia as part of the biosynthesis of pyridoxal 5'-phosphate. The resulting ammonia molecule is channeled to the active site of PdxS. The polypeptide is Pyridoxal 5'-phosphate synthase subunit PdxT (Methanobrevibacter smithii (strain ATCC 35061 / DSM 861 / OCM 144 / PS)).